Reading from the N-terminus, the 338-residue chain is Formamidase (338 aa).

Residues 15–257 (VVIGLAQLAL…DEIVCCELRP (243 aa)) form the CN hydrolase domain. Catalysis depends on Glu61, which acts as the Proton acceptor. Lys130 acts as the Proton donor in catalysis. Residue Cys163 is the Nucleophile of the active site.

It belongs to the carbon-nitrogen hydrolase superfamily. Aliphatic amidase family.

The enzyme catalyses formamide + H2O = formate + NH4(+). Its function is as follows. Is an aliphatic amidase with a restricted substrate specificity, as it only hydrolyzes formamide. In Pseudomonas syringae pv. tomato (strain ATCC BAA-871 / DC3000), this protein is Formamidase.